Reading from the N-terminus, the 352-residue chain is Potassium/proton antiporter CemA (352 aa).

The next 3 membrane-spanning stretches (helical) occupy residues 52-72, 227-247, and 312-332; these read VLVS…IHFF, IAAL…IILF, and IILL…KYWI.

Belongs to the CemA family.

The protein resides in the plastid. Its subcellular location is the chloroplast inner membrane. It carries out the reaction K(+)(in) + H(+)(out) = K(+)(out) + H(+)(in). Its function is as follows. Contributes to K(+)/H(+) antiport activity by supporting proton efflux to control proton extrusion and homeostasis in chloroplasts in a light-dependent manner to modulate photosynthesis. Prevents excessive induction of non-photochemical quenching (NPQ) under continuous-light conditions. Indirectly promotes efficient inorganic carbon uptake into chloroplasts. The polypeptide is Potassium/proton antiporter CemA (Oltmannsiellopsis viridis (Marine flagellate)).